The chain runs to 275 residues: Nurim (275 aa).

Over 1–4 (MASV) the chain is Nuclear. The helical transmembrane segment at 5 to 32 (TFRDGFLCVSALITFVFVFVTGADFVRF) threads the bilayer. At 33–63 (VSFRAINHNLSGAAPLCRDSVPWSVALRDGV) the chain is on the perinuclear space side. Residues 64-85 (VQKAVAVDVLLLVVFSLQHSLL) traverse the membrane as a helical segment. Residues 86 to 102 (AWTPVKRVCQSVFGVLS) are Nuclear-facing. The chain crosses the membrane as a helical span at residues 103–119 (RSVYCFTTAAALQILMH). At 120 to 138 (YWRPVTSAPCLWSVSSAPW) the chain is on the perinuclear space side. The helical transmembrane segment at 139–169 (EIWFPLICFIVHFLCWAIICSILLIFDYPEL) threads the bilayer. Residues 170–196 (LGIKQVYYECLGLGDPLLLKSERAQRL) are Nuclear-facing. A helical membrane pass occupies residues 197–215 (YSHLRHPVCVELLTVLWLL). At 216-221 (PSFPLD) the chain is on the perinuclear space side. Residues 222–239 (RLLLAVFLTVYLILAHSL) form a helical membrane-spanning segment. Topologically, residues 240 to 275 (DKQDCAYLRHQLRNKLQLFSTPLEGSEQTNDNNKLE) are nuclear.

Belongs to the nurim family.

The protein localises to the nucleus inner membrane. The protein is Nurim (nrm) of Danio rerio (Zebrafish).